The primary structure comprises 375 residues: Probable mitochondrial tRNA-specific 2-thiouridylase 1 (375 aa).

ATP contacts are provided by residues 7–14 (GMSGGVDS) and Met33. An interaction with target base in tRNA region spans residues 94–96 (VPD). The active-site Nucleophile is the Cys99. Cys99 and Cys205 form a disulfide bridge. Gly124 lines the ATP pocket. An interaction with tRNA region spans residues 154 to 156 (KDQ). Cys205 serves as the catalytic Cysteine persulfide intermediate. Residues 319-320 (QR) form an interaction with tRNA region.

The protein belongs to the MnmA/TRMU family.

Its subcellular location is the mitochondrion. The catalysed reaction is 5-taurinomethyluridine(34) in tRNA + S-sulfanyl-L-cysteinyl-[protein] + AH2 + ATP = 5-taurinomethyl-2-thiouridine(34) in tRNA + L-cysteinyl-[protein] + A + AMP + diphosphate + H(+). Its function is as follows. Catalyzes the 2-thiolation of uridine at the wobble position (U34) of mitochondrial tRNA(Lys), tRNA(Glu) and tRNA(Gln). Required for the formation of 5-taurinomethyl-2-thiouridine (tm5s2U) of mitochondrial tRNA(Lys), tRNA(Glu), and tRNA(Gln) at the wobble position. ATP is required to activate the C2 atom of the wobble base. This is Probable mitochondrial tRNA-specific 2-thiouridylase 1 from Caenorhabditis elegans.